A 456-amino-acid polypeptide reads, in one-letter code: MWQLASLSLLLTICGTCSTAAPPGSVFSSSESAHQVLRIRKRANSFLEEIRAGSLERECMEEICDFEEAKEIFQNVDDTLAYWSKYVDGDQCAALPPEHACDSPCCGHGSCIDGIGAFHCDCGRGWEGRFCQHEVSYINCSLDNGGCSHYCLEEEGGRHCSCAPGYRLGDDHLQCQPAVKFPCGRPGKQMEKKRKHLKRDTNQTDQIDPRLVNGKVTRRGESPWQVVLLDSKKKLACGAVLIHTSWVLTAAHCMEDSKKLIVRLGEYDLRRWEKGEMDVDIKEVLIHPNYSKSTTDNDIALLHLAQPAIFSQTIVPICLPDSGLAERELTQVGQETVVTGWGYRSETKRNRTFVLNFINIPVAPHNECIQAMYNMISENMLCAGILGDSRDACEGDSGGPMVTSFRGTWFLVGLVSWGEGCGRLHNYGIYTKVSRYLDWIHSHIRGEEASLENQVP.

A signal peptide spans 1 to 20 (MWQLASLSLLLTICGTCSTA). A propeptide spanning residues 21–42 (APPGSVFSSSESAHQVLRIRKR) is cleaved from the precursor. Residues 47-88 (LEEIRAGSLERECMEEICDFEEAKEIFQNVDDTLAYWSKYVD) form the Gla domain. Residues Glu48, Glu49, Glu56, Glu58, Glu61, Glu62, Glu67, Glu68, and Glu71 each carry the 4-carboxyglutamate modification. Residues Cys59 and Cys64 are joined by a disulfide bond. 4 disulfides stabilise this stretch: Cys92–Cys111, Cys101–Cys106, Cys105–Cys120, and Cys122–Cys131. EGF-like domains lie at 97-132 (PEHA…RFCQ) and 136-176 (SYIN…LQCQ). Asp113 is subject to (3R)-3-hydroxyaspartate. N-linked (GlcNAc...) asparagine glycosylation occurs at Asn139. Cystine bridges form between Cys140–Cys151, Cys147–Cys160, Cys162–Cys175, Cys183–Cys318, and Cys237–Cys253. N-linked (GlcNAc...) asparagine glycosylation occurs at Asn202. Positions 211–445 (LVNGKVTRRG…YLDWIHSHIR (235 aa)) constitute a Peptidase S1 domain. His252 acts as the Charge relay system in catalysis. Residue Asn289 is glycosylated (N-linked (GlcNAc...) asparagine). Catalysis depends on Asp298, which acts as the Charge relay system. A glycan (N-linked (GlcNAc...) asparagine) is linked at Asn350. 2 disulfide bridges follow: Cys368-Cys382 and Cys393-Cys421. Ser397 (charge relay system) is an active-site residue.

The protein belongs to the peptidase S1 family. Synthesized as a single chain precursor, which is cleaved into a light chain and a heavy chain held together by a disulfide bond. The enzyme is then activated by thrombin, which cleaves a tetradecapeptide from the amino end of the heavy chain; this reaction, which occurs at the surface of endothelial cells, is strongly promoted by thrombomodulin. In terms of processing, the vitamin K-dependent, enzymatic carboxylation of some Glu residues allows the modified protein to bind calcium. Post-translationally, the iron and 2-oxoglutarate dependent 3-hydroxylation of aspartate and asparagine is (R) stereospecific within EGF domains. Plasma; synthesized in the liver.

It is found in the secreted. It localises to the golgi apparatus. The protein localises to the endoplasmic reticulum. The enzyme catalyses Degradation of blood coagulation factors Va and VIIIa.. Protein C is a vitamin K-dependent serine protease that regulates blood coagulation by inactivating factors Va and VIIIa in the presence of calcium ions and phospholipids. Exerts a protective effect on the endothelial cell barrier function. This chain is Vitamin K-dependent protein C (PROC), found in Canis lupus familiaris (Dog).